A 166-amino-acid chain; its full sequence is NAD(P)H-quinone oxidoreductase subunit I, chloroplastic (166 aa).

4Fe-4S ferredoxin-type domains follow at residues 55 to 84 and 95 to 124; these read GRIHFEFDKCIACEVCVRVCPIDLPVVDWK and LNYSIDFGICIFCGNCVEYCPTNCLSMTEE. Residues Cys64, Cys67, Cys70, Cys74, Cys104, Cys107, Cys110, and Cys114 each coordinate [4Fe-4S] cluster.

This sequence belongs to the complex I 23 kDa subunit family. In terms of assembly, NDH is composed of at least 16 different subunits, 5 of which are encoded in the nucleus. [4Fe-4S] cluster serves as cofactor.

The protein resides in the plastid. The protein localises to the chloroplast thylakoid membrane. The enzyme catalyses a plastoquinone + NADH + (n+1) H(+)(in) = a plastoquinol + NAD(+) + n H(+)(out). The catalysed reaction is a plastoquinone + NADPH + (n+1) H(+)(in) = a plastoquinol + NADP(+) + n H(+)(out). Functionally, NDH shuttles electrons from NAD(P)H:plastoquinone, via FMN and iron-sulfur (Fe-S) centers, to quinones in the photosynthetic chain and possibly in a chloroplast respiratory chain. The immediate electron acceptor for the enzyme in this species is believed to be plastoquinone. Couples the redox reaction to proton translocation, and thus conserves the redox energy in a proton gradient. The polypeptide is NAD(P)H-quinone oxidoreductase subunit I, chloroplastic (Pentanema britannica (British yellowhead)).